Consider the following 176-residue polypeptide: Cathelicidin-2 (176 aa).

The signal sequence occupies residues 1–29 (METQGASLSLGRWSLWLLLLGLVLPSASA). Glutamine 30 is subject to Pyrrolidone carboxylic acid. Positions 30–130 (QALSYREAVL…DINCNELQSV (101 aa)) are excised as a propeptide. 2 disulfides stabilise this stretch: cysteine 85–cysteine 96 and cysteine 107–cysteine 124. Residues 135-176 (PIRRPPIRPPFRPPFRPPVRPPIRPPFRPPFRPPIGPFPGRR) are disordered. Residues 141–176 (IRPPFRPPFRPPVRPPIRPPFRPPFRPPIGPFPGRR) are compositionally biased toward pro residues. Position 173 is a proline amide (proline 173). The propeptide at 174–176 (GRR) is removed in mature form.

The protein belongs to the cathelicidin family. Elastase is responsible for its maturation.

It is found in the secreted. Its function is as follows. Binds to the lipid A moiety of bacterial lipipolysaccharides (LPS), a glycolipid present in the outer membrane of all Gram-negative bacteria. Potent antimicrobial activity. The chain is Cathelicidin-2 (CATHL2) from Ovis aries (Sheep).